A 238-amino-acid chain; its full sequence is Cysteine-rich venom protein pseudechetoxin-like (238 aa).

The first 19 residues, 1–19, serve as a signal peptide directing secretion; it reads MIAFIVLLSLAAVLQQSSG. The propeptide occupies 20–28; it reads TVDFASESS. One can recognise an SCP domain in the interval 38 to 164; that stretch reads VDKHNALRRS…STKYLYVCQY (127 aa). Intrachain disulfides connect cysteine 75/cysteine 153, cysteine 92/cysteine 165, cysteine 148/cysteine 162, cysteine 184/cysteine 191, cysteine 187/cysteine 196, cysteine 200/cysteine 233, cysteine 209/cysteine 227, and cysteine 218/cysteine 231. One can recognise a ShKT domain in the interval 200-233; sequence CKYEDDFSNCKALAKNSKCQTEWIKSKCPAACFC.

This sequence belongs to the CRISP family. Expressed by the venom gland.

It localises to the secreted. Functionally, blocks olfactory (CNGA2) and retinal (CNGA1) CNG channel currents. Does not affect neither depolarization- nor caffeine-induced contraction of smooth muscle. In Notechis scutatus scutatus (Mainland tiger snake), this protein is Cysteine-rich venom protein pseudechetoxin-like.